The chain runs to 235 residues: Secretory carrier-associated membrane protein 5 (235 aa).

Residues 1 to 39 (MAEKVNNFPPLPKFIPLKPCFYQDFEADIPPQHVSMTKR) are Cytoplasmic-facing. Residues 40–60 (LYYLWMLNSVTLAVNLVGCLA) form a helical membrane-spanning segment. The Extracellular portion of the chain corresponds to 61-67 (WLIGGGG). The helical transmembrane segment at 68–88 (ATNFGLAFLWLILFTPCSYVC) threads the bilayer. Over 89 to 102 (WFRPIYKAFKTDSS) the chain is Cytoplasmic. Residues 103 to 125 (FSFMAFFFTFMAQLVISIIQAVG) form a helical membrane-spanning segment. Over 126 to 148 (IPGWGVCGWIATISFFGTNIGSA) the chain is Extracellular. Residues 149–169 (VVMLIPTVMFTVMAVFSFIAL) form a helical membrane-spanning segment. The Cytoplasmic segment spans residues 170–235 (SMVHKFYRGS…TPNYTYSNEM (66 aa)).

This sequence belongs to the SCAMP family. SCAMP5 subfamily. Interacts (via C-terminal part) with SYT1 and SYT2; interaction with synaptotagmins making a link with the SNARE molecules. Interacts with SLC9A7. As to expression, expressed both by neuronal and non-neuronal tissues. Expressed in brain, stomach, thyroid, spinal cord, lymph node, trachea, adrenal gland, bone marrow and in the different parts of brain. In thyroid tissues, it is expressed by the follicular epithelial cells. In the adrenal gland tissues it is detected in the zona fasciculata of the cortex region (at protein level).

It is found in the cell membrane. The protein resides in the golgi apparatus membrane. It localises to the golgi apparatus. The protein localises to the trans-Golgi network membrane. Its subcellular location is the recycling endosome membrane. It is found in the cytoplasmic vesicle. The protein resides in the secretory vesicle. It localises to the synaptic vesicle membrane. In terms of biological role, required for the calcium-dependent exocytosis of signal sequence-containing cytokines such as CCL5. Probably acts in cooperation with the SNARE machinery. May play a role in accumulation of expanded polyglutamine (polyQ) protein huntingtin (HTT) in case of endoplasmic reticulum stress by inhibiting the endocytosis pathway. This is Secretory carrier-associated membrane protein 5 (SCAMP5) from Homo sapiens (Human).